The chain runs to 135 residues: MSTFHFDLVSPEMVAFSGDVDQVDIPGAEGDFGVLAGHAPVVAVIRPGILTVTAGANKQKIVVLGGIAEVSDKGLTVLADVATPAPDVDLQDFAATIQTMEQQIPGKVGDELDRAIERLDHFKSIQHELNTTAMH.

Belongs to the ATPase epsilon chain family. F-type ATPases have 2 components, CF(1) - the catalytic core - and CF(0) - the membrane proton channel. CF(1) has five subunits: alpha(3), beta(3), gamma(1), delta(1), epsilon(1). CF(0) has three main subunits: a, b and c.

The protein localises to the cell inner membrane. Produces ATP from ADP in the presence of a proton gradient across the membrane. This chain is ATP synthase epsilon chain, found in Rhodopseudomonas palustris (strain ATCC BAA-98 / CGA009).